The primary structure comprises 62 residues: Cecropin-A (62 aa).

The first 20 residues, 1 to 20, serve as a signal peptide directing secretion; it reads MNLVKILFCVFACLVFTVTA. The propeptide at 21 to 24 is removed by a dipeptidylpeptidase; it reads VPEP. Thr60 is subject to Threonine amide.

It belongs to the cecropin family.

The protein localises to the secreted. Its function is as follows. Has antibacterial activity. This is Cecropin-A from Trichoplusia ni (Cabbage looper).